The sequence spans 244 residues: Ferric aerobactin reductase IutB (244 aa).

[2Fe-2S] cluster-binding residues include Cys220, Cys221, Cys232, and Cys235.

In terms of assembly, monomer. It depends on [2Fe-2S] cluster as a cofactor.

The protein localises to the cytoplasm. The catalysed reaction is 2 a Fe(II)-siderophore + NAD(+) + H(+) = 2 a Fe(III)-siderophore + NADH. It carries out the reaction 2 a Fe(II)-siderophore + NADP(+) + H(+) = 2 a Fe(III)-siderophore + NADPH. In terms of biological role, ferric-siderophore reductase involved in iron removal from the siderophores after their transport into the cell. Acts as a major ferric-aerobactin reductase catalyzing the reduction of Fe(3+)-aerobactin, a citrate-hydroxamate siderophore produced by other bacteria. Catalyzes reduction of Fe(3+)-vulnibactin, a catecholate siderophore synthesized by V.vulnificus, in the absence of VuuB. Catalyzes reduction of ferrioxamine B and Fe(3+)-vibriobactin in vitro. No activity with Fe(3+)-enterobactin. Catalyzes reduction of ferric chelating compound Fe(3+)-nitrilotriacetic acid (NTA) in the presence of NADH, NADPH or reduced glutathione (GSH) as its electron donor in vitro. Also catalyzes reduction of ferric chelating compounds Fe(3+)-citrate and Fe(3+)-EDTA as well as non-complexed FeCl3 in the presence of GSH as its electron donor in vitro. Highest activity with Fe(3+)-NTA as electron acceptor and GSH as donor. The polypeptide is Ferric aerobactin reductase IutB (Vibrio vulnificus).